The primary structure comprises 470 residues: Pyoverdine export outer membrane protein OpmQ (470 aa).

The first 18 residues, 1–18 (MTLPRHLCLLPLSLSLLA), serve as a signal peptide directing secretion. Cysteine 19 carries the N-palmitoyl cysteine lipid modification. Cysteine 19 carries the S-diacylglycerol cysteine lipid modification.

The protein belongs to the outer membrane factor (OMF) (TC 1.B.17) family. Part of the tripartite efflux system PvdRT-OpmQ, which is composed of an inner membrane component with both ATPase and permease domains, PvdT, a periplasmic membrane fusion protein, PvdR, and an outer membrane component, OpmQ.

It localises to the cell outer membrane. In terms of biological role, part of the tripartite efflux system PvdRT-OpmQ required for the secretion into the extracellular milieu of the siderophore pyoverdine (PVD), which is involved in iron acquisition. The system is responsible for export of newly synthesized PVD after the final steps of biosynthesis have taken place in the periplasm. It is also responsible for recycling of PVD after internalization of ferri-PVD into the periplasm by the outer-membrane receptor FpvA and release of iron from PVD, thus making PVD available for new cycles of iron uptake. Contributes to resistance against ampicillin. The chain is Pyoverdine export outer membrane protein OpmQ from Pseudomonas putida (strain ATCC 47054 / DSM 6125 / CFBP 8728 / NCIMB 11950 / KT2440).